The following is a 91-amino-acid chain: Small ribosomal subunit protein bS20 (91 aa).

Residues 1–26 (MANLKSSKKDIRRTARRKERNGEDRT) form a disordered region.

Belongs to the bacterial ribosomal protein bS20 family.

Functionally, binds directly to 16S ribosomal RNA. This is Small ribosomal subunit protein bS20 from Leptospira biflexa serovar Patoc (strain Patoc 1 / Ames).